The primary structure comprises 853 residues: MDQLIPVINKLQDVFNTLGSDPLDLPQIVVVGSQSSGKSSVLENIVGRDFLPRGSGIVTRRPLILQLTHLPIADDGSQTQEWGEFLHKPNDMFYDFSEIREEIIRDTDRMTGKNKGISAQPINLKIYSPHVVNLTLVDLPGITKVPVGDQPTDIEQQIRRMVMAYIKKQNAIIVAVTPANTDLANSDALQLAKEVDPEGKRTIGVITKLDLMDKGTDAMEVLTGRVIPLTLGFIGVINRSQEDIIAKKSIRESLKSEILYFKNHPIYKSIANRSGTAYLSKTLNKLLMFHIRDTLPDLKVKVSKMLSDVQGELSTYGDPLYDTKNSQGALLLQIITIFSSNFKDAIDGKLTDLSNNELYGGARISYIFNEIYSHCVNNIDPLEGISLNDIRTTMRNATGPRAALFIPEISFELLVKKQVVRLEEPSAQCVEYVYDELQRIVSQLEAKELSRFINLKARVIEVVNNLLQKHKVPTKTMIEHLIKIETAFINTSHPDFVGGEGIFESLYKKQQLQQQNHLQQLQDQYQQQQQQQQQQQQQNGINNNQKGDNGNMNVNQQNMNQQNMNQQNQSTNPFLQQQQQGQNKYPGGPPAQQQPNQQPNQLNKGPQNMPPNQSKPSSIPQNGPNNNNNNNNNNNRQDHQQGSFFSSFFRASPDPSLGQYGGANNSNNSNNPTSPINSSSNSGNNYNTFGGQQSSSSSSQQLQQSSQSQYKTSYNNNNNSSSNNSSYNRYQDDFYGRGDKLNQVPSIIKAPDDLTSKEKFETELIRELLISYFNIVKKNVKDSVPKSIMHFLVNQSKEHIQNELVAALYKEELFDELLEESPQISSKRKSCKAMIEILRKANEIINEIRDFRN.

In terms of domain architecture, Dynamin-type G spans 22-296 (PLDLPQIVVV…LMFHIRDTLP (275 aa)). Residues 32–39 (GSQSSGKS) form a G1 motif region. 32-40 (GSQSSGKSS) serves as a coordination point for GTP. Residues 58–60 (VTR) are G2 motif. Residues 138–141 (DLPG) form a G3 motif region. A G4 motif region spans residues 207–210 (TKLD). GTP-binding positions include 207–213 (TKLDLMD) and 238–241 (NRSQ). Residues 237–240 (INRS) form a G5 motif region. 2 stretches are compositionally biased toward low complexity: residues 523-569 (DQYQ…QQNQ) and 590-607 (PAQQ…KGPQ). The interval 523–738 (DQYQQQQQQQ…RYQDDFYGRG (216 aa)) is disordered. Over residues 610-624 (PPNQSKPSSIPQNGP) the composition is skewed to polar residues. Low complexity-rich tracts occupy residues 625-635 (NNNNNNNNNNN) and 664-728 (NNSN…SSYN). Residues 762–853 (TELIRELLIS…IINEIRDFRN (92 aa)) form the GED domain.

This sequence belongs to the TRAFAC class dynamin-like GTPase superfamily. Dynamin/Fzo/YdjA family.

The protein localises to the cytoplasm. Its function is as follows. Function in membrane trafficking processes along the endo-lysosomal pathway. This is Dynamin-A (dymA) from Dictyostelium discoideum (Social amoeba).